The primary structure comprises 459 residues: Ribulose bisphosphate carboxylase large chain (459 aa).

Lys-4 is modified (N6,N6,N6-trimethyllysine). The substrate site is built by Asn-113 and Thr-163. Catalysis depends on Lys-165, which acts as the Proton acceptor. Position 167 (Lys-167) interacts with substrate. Mg(2+) is bound by residues Lys-191, Asp-193, and Glu-194. Lys-191 is subject to N6-carboxylysine. The active-site Proton acceptor is His-284. Residues Arg-285, His-317, and Ser-369 each contribute to the substrate site.

This sequence belongs to the RuBisCO large chain family. Type I subfamily. Heterohexadecamer of 8 large chains and 8 small chains; disulfide-linked. The disulfide link is formed within the large subunit homodimers. It depends on Mg(2+) as a cofactor. The disulfide bond which can form in the large chain dimeric partners within the hexadecamer appears to be associated with oxidative stress and protein turnover.

It localises to the plastid. Its subcellular location is the chloroplast. It carries out the reaction 2 (2R)-3-phosphoglycerate + 2 H(+) = D-ribulose 1,5-bisphosphate + CO2 + H2O. The enzyme catalyses D-ribulose 1,5-bisphosphate + O2 = 2-phosphoglycolate + (2R)-3-phosphoglycerate + 2 H(+). RuBisCO catalyzes two reactions: the carboxylation of D-ribulose 1,5-bisphosphate, the primary event in carbon dioxide fixation, as well as the oxidative fragmentation of the pentose substrate in the photorespiration process. Both reactions occur simultaneously and in competition at the same active site. This Parnassia fimbriata (Fringed grass-of-Parnassus) protein is Ribulose bisphosphate carboxylase large chain.